The chain runs to 173 residues: Large ribosomal subunit protein bL9 (173 aa).

Residues 151-173 (YDDTPDRTETEESTKELQEEHAE) form a disordered region.

The protein belongs to the bacterial ribosomal protein bL9 family.

Functionally, binds to the 23S rRNA. The sequence is that of Large ribosomal subunit protein bL9 from Lawsonia intracellularis (strain PHE/MN1-00).